The sequence spans 254 residues: NH(3)-dependent NAD(+) synthetase (254 aa).

An ATP-binding site is contributed by 32–39 (GISGGVDS). Aspartate 38 is a binding site for Mg(2+). Residue arginine 113 participates in deamido-NAD(+) binding. An ATP-binding site is contributed by threonine 133. Glutamate 138 provides a ligand contact to Mg(2+). Deamido-NAD(+) is bound by residues lysine 146 and aspartate 153. Residues lysine 162 and serine 184 each coordinate ATP. Residue 244-245 (HK) participates in deamido-NAD(+) binding.

The protein belongs to the NAD synthetase family. As to quaternary structure, homodimer.

The catalysed reaction is deamido-NAD(+) + NH4(+) + ATP = AMP + diphosphate + NAD(+) + H(+). It functions in the pathway cofactor biosynthesis; NAD(+) biosynthesis; NAD(+) from deamido-NAD(+) (ammonia route): step 1/1. In terms of biological role, catalyzes the ATP-dependent amidation of deamido-NAD to form NAD. Uses ammonia as a nitrogen source. The chain is NH(3)-dependent NAD(+) synthetase from Thermococcus sibiricus (strain DSM 12597 / MM 739).